The sequence spans 678 residues: Probable E3 ubiquitin ligase complex SCF subunit sconB (678 aa).

The disordered stretch occupies residues 1-52 (MSTEDNHDSQILTARHRSDASEQSFKSLFGGPSSEDGKETEPDTHDHNHSFS). Positions 35–49 (EDGKETEPDTHDHNH) are enriched in basic and acidic residues. In terms of domain architecture, F-box spans 178 to 224 (IDFITALPPEIAFKILCYLDTTSLCKASQVSRGWRALADDDVVWHRM). Residues 266–287 (VVGPRSPDASAESPPSGKRKLE) form a disordered region. WD repeat units follow at residues 347–375 (GHTNGVMCLQFEDNILATGSYDTTIKIWD), 387–415 (GHESGIRCLQFDDTKLISGSMDRTIKVWN), 427–455 (GHRGGVIGLHFDASILASGSVDKTVKIWN), 466–496 (GHTDWVNAVRVDTSSRTVFSASDDCTVRLWD), 508–543 (GHVGQVQQVVPLPREFEFEEHDAECENDDLSTTSGD), 553–595 (MGLE…RLWE), 607–635 (GHLEGVWALGADTLRIVSGAEDRMIKIWD), and 647–675 (GHSGPVTCIGLGDSRFATGSEDCEVRMYS).

Belongs to the WD repeat MET30/SCONB/SCON-2 family. In terms of assembly, component of the SCF(sconB) E3 ubiquitin ligase complex.

It functions in the pathway protein modification; protein ubiquitination. Functionally, component of the SCF(sconB) E3 ubiquitin ligase complex involved in the regulation of sulfur metabolite repression, probably by mediating the inactivation or degradation of the metR transcription factor. The protein is Probable E3 ubiquitin ligase complex SCF subunit sconB (sconB) of Emericella nidulans (strain FGSC A4 / ATCC 38163 / CBS 112.46 / NRRL 194 / M139) (Aspergillus nidulans).